Reading from the N-terminus, the 104-residue chain is UPF0235 protein MTH_637 (104 aa).

The protein belongs to the UPF0235 family.

The chain is UPF0235 protein MTH_637 from Methanothermobacter thermautotrophicus (strain ATCC 29096 / DSM 1053 / JCM 10044 / NBRC 100330 / Delta H) (Methanobacterium thermoautotrophicum).